Here is a 337-residue protein sequence, read N- to C-terminus: Tetraacyldisaccharide 4'-kinase (337 aa).

58-65 (TVGGSGKT) contacts ATP.

The protein belongs to the LpxK family.

The enzyme catalyses a lipid A disaccharide + ATP = a lipid IVA + ADP + H(+). It functions in the pathway glycolipid biosynthesis; lipid IV(A) biosynthesis; lipid IV(A) from (3R)-3-hydroxytetradecanoyl-[acyl-carrier-protein] and UDP-N-acetyl-alpha-D-glucosamine: step 6/6. Functionally, transfers the gamma-phosphate of ATP to the 4'-position of a tetraacyldisaccharide 1-phosphate intermediate (termed DS-1-P) to form tetraacyldisaccharide 1,4'-bis-phosphate (lipid IVA). This chain is Tetraacyldisaccharide 4'-kinase, found in Shewanella putrefaciens (strain CN-32 / ATCC BAA-453).